A 102-amino-acid chain; its full sequence is Small ribosomal subunit protein uS10 (102 aa).

Belongs to the universal ribosomal protein uS10 family. As to quaternary structure, part of the 30S ribosomal subunit.

In terms of biological role, involved in the binding of tRNA to the ribosomes. The chain is Small ribosomal subunit protein uS10 from Geotalea daltonii (strain DSM 22248 / JCM 15807 / FRC-32) (Geobacter daltonii).